A 159-amino-acid chain; its full sequence is Endoribonuclease YbeY (159 aa).

The Zn(2+) site is built by H125, H129, and H135.

It belongs to the endoribonuclease YbeY family. Zn(2+) serves as cofactor.

The protein resides in the cytoplasm. Its function is as follows. Single strand-specific metallo-endoribonuclease involved in late-stage 70S ribosome quality control and in maturation of the 3' terminus of the 16S rRNA. The protein is Endoribonuclease YbeY of Thermoanaerobacter pseudethanolicus (strain ATCC 33223 / 39E) (Clostridium thermohydrosulfuricum).